A 90-amino-acid polypeptide reads, in one-letter code: Cytochrome c7 (90 aa).

The first 20 residues, 1-20 (MKRIIASLALSVFCAGLAFA), serve as a signal peptide directing secretion. Positions 37, 40, 47, 50, 51, 67, 70, 73, 74, 84, 87, and 88 each coordinate heme.

Binds 3 heme groups per subunit.

Functionally, may be involved in anaerobic iron respiration. This Geobacter metallireducens (strain ATCC 53774 / DSM 7210 / GS-15) protein is Cytochrome c7.